The primary structure comprises 549 residues: Eukaryotic translation initiation factor 3 subunit D (549 aa).

The disordered stretch occupies residues 101–130 (QSYQRGRARGQRGRGARGARTPGGMTTLNK). Positions 106–117 (GRARGQRGRGAR) are enriched in basic residues. The interval 277–291 (EFDLLTVNETSVEPP) is RNA gate. A disordered region spans residues 521–549 (ESDASEESGDEQADTPFAPLYSYGNSKRV). Over residues 523–533 (DASEESGDEQA) the composition is skewed to acidic residues.

Belongs to the eIF-3 subunit D family. As to quaternary structure, component of the eukaryotic translation initiation factor 3 (eIF-3) complex.

It localises to the cytoplasm. Functionally, mRNA cap-binding component of the eukaryotic translation initiation factor 3 (eIF-3) complex, which is involved in protein synthesis of a specialized repertoire of mRNAs and, together with other initiation factors, stimulates binding of mRNA and methionyl-tRNAi to the 40S ribosome. The eIF-3 complex specifically targets and initiates translation of a subset of mRNAs involved in cell proliferation. In the eIF-3 complex, eif3d specifically recognizes and binds the 7-methylguanosine cap of a subset of mRNAs. This chain is Eukaryotic translation initiation factor 3 subunit D, found in Bombyx mori (Silk moth).